Reading from the N-terminus, the 438-residue chain is 23S rRNA (uracil(1939)-C(5))-methyltransferase RlmD (438 aa).

Positions 13 to 71 (KAPLGPMQTYLVEGLTHEAKGVARLNGKVTFIEGALPGETVTAQVNKPGRRFDEAVLNA) constitute a TRAM domain. Cys-84, Cys-90, Cys-93, and Cys-167 together coordinate [4Fe-4S] cluster. Residues Gln-271, Phe-300, Asn-305, Glu-321, Asp-348, and Asp-368 each contribute to the S-adenosyl-L-methionine site. The Nucleophile role is filled by Cys-394.

This sequence belongs to the class I-like SAM-binding methyltransferase superfamily. RNA M5U methyltransferase family. RlmD subfamily.

It carries out the reaction uridine(1939) in 23S rRNA + S-adenosyl-L-methionine = 5-methyluridine(1939) in 23S rRNA + S-adenosyl-L-homocysteine + H(+). Catalyzes the formation of 5-methyl-uridine at position 1939 (m5U1939) in 23S rRNA. The polypeptide is 23S rRNA (uracil(1939)-C(5))-methyltransferase RlmD (Marinomonas posidonica (strain CECT 7376 / NCIMB 14433 / IVIA-Po-181)).